The sequence spans 223 residues: Uracil-DNA glycosylase (223 aa).

The Proton acceptor role is filled by D67.

This sequence belongs to the uracil-DNA glycosylase (UDG) superfamily. UNG family.

The protein resides in the cytoplasm. It catalyses the reaction Hydrolyzes single-stranded DNA or mismatched double-stranded DNA and polynucleotides, releasing free uracil.. In terms of biological role, excises uracil residues from the DNA which can arise as a result of misincorporation of dUMP residues by DNA polymerase or due to deamination of cytosine. In Borrelia hermsii (strain HS1 / DAH), this protein is Uracil-DNA glycosylase.